A 377-amino-acid polypeptide reads, in one-letter code: Prostaglandin reductase-3 (377 aa).

Lysine 35 carries the post-translational modification N6-acetyllysine. Residues threonine 185, serine 205, lysine 209, tyrosine 224, serine 247, isoleucine 269, and tyrosine 275 each coordinate NADP(+). A Phosphoserine modification is found at serine 299. Residues phenylalanine 303–leucine 305 and asparagine 361 each bind NADP(+).

This sequence belongs to the zinc-containing alcohol dehydrogenase family. Quinone oxidoreductase subfamily.

The protein resides in the peroxisome. It catalyses the reaction 13,14-dihydro-15-oxo-prostaglandin E2 + NADP(+) = 15-oxoprostaglandin E2 + NADPH + H(+). It carries out the reaction 13,14-dihydro-15-oxo-prostaglandin E1 + NADP(+) = 15-oxoprostaglandin E1 + NADPH + H(+). The enzyme catalyses 13,14-dihydro-15-oxo-PGF2alpha + NADP(+) = 15-oxoprostaglandin F2alpha + NADPH + H(+). The catalysed reaction is 13,14-dihydro-15-oxo-prostaglandin F1alpha + NADP(+) = 15-oxoprostaglandin F1alpha + NADPH + H(+). Its function is as follows. Functions as 15-oxo-prostaglandin 13-reductase and acts on 15-keto-PGE1, 15-keto-PGE2, 15-keto-PGE1-alpha and 15-keto-PGE2-alpha with highest efficiency towards 15-keto-PGE2-alpha. Overexpression represses transcriptional activity of PPARG and inhibits adipocyte differentiation. This is Prostaglandin reductase-3 (PTGR3) from Bos taurus (Bovine).